Reading from the N-terminus, the 579-residue chain is Mycobactin import ATP-binding/permease protein IrtB (579 aa).

At 1-16 the chain is on the cytoplasmic side; the sequence is MIRTWIALVPNDHRAR. The helical transmembrane segment at 17–37 threads the bilayer; it reads LIGFALLAFCSVVARAVGTVL. An ABC transmembrane type-1 domain is found at 17 to 299; the sequence is LIGFALLAFC…VSELAPALES (283 aa). At 38-52 the chain is on the periplasmic side; the sequence is LVPLMAALFGEAPQR. The chain crosses the membrane as a helical span at residues 53–73; it reads AWLWLGWLSAATVAGWVLDAV. Over 74–123 the chain is Cytoplasmic; that stretch reads TARIGIELGFAVLNHTQHDVADRLPVVRLDWFTAENTATARQAIAATGPE. Residues 124–146 form a helical membrane-spanning segment; sequence LVGLVVNLVTPLTSAILLPAVIA. Topologically, residues 147–155 are periplasmic; that stretch reads LALLPISWQ. Residues 156–178 form a helical membrane-spanning segment; sequence LGVAALAGVPLLLGALWASAAFA. Residues 179 to 237 are Cytoplasmic-facing; the sequence is RRADTAADKANTALTERIIEFARTQQALRAARRVEPARSLVGNALASQHTATMRLLGMQ. The chain crosses the membrane as a helical span at residues 238 to 258; that stretch reads IPGQLLFSIASQLALIVLAGT. The Periplasmic portion of the chain corresponds to 259–579; the sequence is TAALTITGTL…EAAEWQILAE (321 aa). Residues 332 to 567 enclose the ABC transporter domain; the sequence is IEFDDVAFGY…GGRFSQFWRQ (236 aa). 366 to 373 is an ATP binding site; the sequence is GPSGCGKS.

The protein belongs to the ABC transporter superfamily. Siderophore-Fe(3+) uptake transporter (SIUT) (TC 3.A.1.21) family. As to quaternary structure, forms a heterodimer with IrtA.

It is found in the cell inner membrane. Functionally, part of the ABC transporter complex IrtAB involved in the import of iron-bound mycobactin (Fe-MBT) and carboxymycobactin (Fe-cMBT). Transmembrane domains (TMD) form a pore in the membrane and the ATP-binding domain (NBD) is responsible for energy generation. The sequence is that of Mycobactin import ATP-binding/permease protein IrtB (irtB) from Mycobacterium bovis (strain ATCC BAA-935 / AF2122/97).